Reading from the N-terminus, the 402-residue chain is Pyruvate synthase subunit PorA (402 aa).

As to quaternary structure, heterotetramer of one alpha, one beta, one delta and one gamma chain.

The enzyme catalyses 2 oxidized [2Fe-2S]-[ferredoxin] + pyruvate + CoA = 2 reduced [2Fe-2S]-[ferredoxin] + acetyl-CoA + CO2 + H(+). In Methanosarcina barkeri (strain Fusaro / DSM 804), this protein is Pyruvate synthase subunit PorA (porA).